The primary structure comprises 465 residues: Ras GTPase-activating protein-binding protein 1 (465 aa).

The region spanning 11 to 133 (VGREFVRQYY…FYVHNDIFRY (123 aa)) is the NTF2 domain. Glycyl lysine isopeptide (Lys-Gly) (interchain with G-Cter in ubiquitin) cross-links involve residues Lys36, Lys50, Lys59, Lys64, Lys76, and Lys123. The segment at 142–224 (VTEPQEESEE…EAALEEAAPD (83 aa)) is acidic disordered region. Thr143 bears the Phosphothreonine mark. Residues 144 to 330 (EPQEESEEEV…GEPGDVEPRR (187 aa)) form a disordered region. Acidic residues-rich tracts occupy residues 145 to 157 (PQEE…EEPE) and 184 to 205 (EHLE…EPEP). Ser149 carries the post-translational modification Phosphoserine. Ser231, Ser248, and Ser251 each carry phosphoserine. Positions 248–257 (SWASVTSKNL) are enriched in polar residues. 2 stretches are compositionally biased toward basic and acidic residues: residues 295-305 (PQRDQRVREQR) and 316-330 (PIRE…EPRR). Residues 338-413 (HQLFIGNLPH…VRLNVEEKKT (76 aa)) enclose the RRM domain. Residues Lys351 and Lys355 each participate in a glycyl lysine isopeptide (Lys-Gly) (interchain with G-Cter in ubiquitin) cross-link. A Phosphoserine modification is found at Ser371. Lys374 is covalently cross-linked (Glycyl lysine isopeptide (Lys-Gly) (interchain with G-Cter in ubiquitin)). Residue Lys374 is modified to N6-acetyllysine; alternate. Residue Lys374 forms a Glycyl lysine isopeptide (Lys-Gly) (interchain with G-Cter in SUMO2); alternate linkage. Lys391 participates in a covalent cross-link: Glycyl lysine isopeptide (Lys-Gly) (interchain with G-Cter in ubiquitin); alternate. An RG-rich region region spans residues 408-464 (VEEKKTRAAREGDRRDNRLRGPGGPRGGPSGGMRGPPRGGMVQKPGFGVGRGITTPR). Over residues 411-426 (KKTRAAREGDRRDNRL) the composition is skewed to basic and acidic residues. Positions 411–465 (KKTRAAREGDRRDNRLRGPGGPRGGPSGGMRGPPRGGMVQKPGFGVGRGITTPRQ) are disordered. Arg427 is subject to Asymmetric dimethylarginine. Positions 428–445 (GPGGPRGGPSGGMRGPPR) are enriched in gly residues. Asymmetric dimethylarginine; alternate is present on Arg433. Residues Arg433, Arg445, Arg458, and Arg464 each carry the omega-N-methylarginine; alternate modification. Arg458 is modified (dimethylated arginine; alternate).

In terms of assembly, homodimer and oligomer. Component of a TAU mRNP complex, at least composed of IGF2BP1, ELAVL4 and G3BP1. Binds to the SH3 domain of Ras GTPase-activating protein (RASA1) in proliferating cells. No interaction in quiescent cells. Interacts (via NTF2 domain) with USP10; inhibiting stress granule formation by lowering G3BP1 valence. Interacts (via NTF2 domain) with CAPRIN1; promoting stress granule formation by lowering the saturation-concentration of G3BP1. Interacts (via NTF2 domain) with UBAP2L; promoting stress granule formation. Associates (via RG-rich region) with 40S ribosome subunits. Interacts with RPTOR and SPAG5; this complex is increased by oxidative stress. Interacts with ATXN2L. Interacts with STYXL1. Interacts with CGAS (via N-terminus); this interaction promotes the DNA-binding and activation of CGAS. Interacts (via C-terminus) with RIGI. Interacts with PABPC1. Interacts with QKI (isoforms QKI6 and QKI7); directing N(7)-methylguanine-containing mRNAs to stress granules. Mg(2+) is required as a cofactor. In terms of processing, phosphorylation of the acidic disordered region regulates stress granule assembly. RASA1-dependent phosphorylation of Ser-149 induces a conformational change that prevents self-association. Dephosphorylation after HRAS activation is required for stress granule assembly. Ser-149 phosphorylation induces partial nuclear localization. Arg-435 is dimethylated, probably to asymmetric dimethylarginine. Post-translationally, ubiquitinated by TRIM21 via 'Lys-63'-linked polyubiquitination in the NTF2 domain in response to heat shock, leading to stress granule disassembly: ubiquitination promotes interaction with the FAF2 adapter, followed by interaction with VCP, which extracts G3BP1 from stress granules, leading to stress granule disassembly. In case of prolonged stress, ubiquitination by TRIM21 leads to autophagy-dependent degradation of G3BP1 via recruitment of ubiquitinated G3BP1 by SQSTM1 and/or CALCOCO2 to autophagosomes. Ubiquitous.

The protein localises to the cytoplasm. It localises to the cytosol. It is found in the perikaryon. Its subcellular location is the stress granule. The protein resides in the nucleus. It carries out the reaction ATP + H2O = ADP + phosphate + H(+). With respect to regulation, under physiological conditions, G3BP1 adopts a compact state that is stabilized by intramolecular interactions between the RG-rich and the acidic regions that inhibit phase separation. Upon stress, polysomes disassemble and mRNAs are released in an unfolded protein-free state. Binding of unfolded mRNA to G3BP1 outcompetes the intramolecular interactions and RNA-bound G3BP1 adopts an expanded conformation in which the RG-rich region becomes exposed to engage in protein-protein and protein-RNA interactions, allowing physical cross-linking of RNA molecules to form protein-RNA condensates, leading to liquid-liquid phase separation (LLPS). Its function is as follows. Protein involved in various processes, such as stress granule formation and innate immunity. Plays an essential role in stress granule formation. Stress granules are membraneless compartments that store mRNAs and proteins, such as stalled translation pre-initiation complexes, in response to stress. Promotes formation of stress granules phase-separated membraneless compartment by undergoing liquid-liquid phase separation (LLPS) upon unfolded RNA-binding: functions as a molecular switch that triggers RNA-dependent LLPS in response to a rise in intracellular free RNA concentrations. Also acts as an ATP- and magnesium-dependent helicase: unwinds DNA/DNA, RNA/DNA, and RNA/RNA substrates with comparable efficiency. Acts unidirectionally by moving in the 5' to 3' direction along the bound single-stranded DNA. Unwinds preferentially partial DNA and RNA duplexes having a 17 bp annealed portion and either a hanging 3' tail or hanging tails at both 5'- and 3'-ends. Plays an essential role in innate immunity by promoting CGAS and RIGI activity. Participates in the DNA-triggered cGAS/STING pathway by promoting the DNA binding and activation of CGAS. Triggers the condensation of cGAS, a process probably linked to the formation of membrane-less organelles. Also enhances RIGI-induced type I interferon production probably by helping RIGI at sensing pathogenic RNA. May also act as a phosphorylation-dependent sequence-specific endoribonuclease in vitro: Cleaves exclusively between cytosine and adenine and cleaves MYC mRNA preferentially at the 3'-UTR. This Mus musculus (Mouse) protein is Ras GTPase-activating protein-binding protein 1 (G3bp1).